A 172-amino-acid polypeptide reads, in one-letter code: Translation initiation factor IF-3 (172 aa).

The protein belongs to the IF-3 family. As to quaternary structure, monomer.

Its subcellular location is the cytoplasm. In terms of biological role, IF-3 binds to the 30S ribosomal subunit and shifts the equilibrium between 70S ribosomes and their 50S and 30S subunits in favor of the free subunits, thus enhancing the availability of 30S subunits on which protein synthesis initiation begins. This is Translation initiation factor IF-3 from Bartonella henselae (strain ATCC 49882 / DSM 28221 / CCUG 30454 / Houston 1) (Rochalimaea henselae).